A 576-amino-acid polypeptide reads, in one-letter code: Quinone-reactive Ni/Fe-hydrogenase large chain (576 aa).

4 residues coordinate Ni(2+): C62, C65, C547, and C550.

The protein belongs to the [NiFe]/[NiFeSe] hydrogenase large subunit family. In terms of assembly, heterodimer of a large and a small subunit. It depends on Ni(2+) as a cofactor.

It localises to the cell membrane. The catalysed reaction is H2 + a menaquinone = a menaquinol. Its function is as follows. This enzyme recycles the H(2) produced by nitrogenase to increase the production of ATP and to protect nitrogenase against inhibition or damage by O(2) under carbon- or phosphate-limited conditions. The chain is Quinone-reactive Ni/Fe-hydrogenase large chain (hydB) from Wolinella succinogenes (strain ATCC 29543 / DSM 1740 / CCUG 13145 / JCM 31913 / LMG 7466 / NCTC 11488 / FDC 602W) (Vibrio succinogenes).